A 665-amino-acid polypeptide reads, in one-letter code: Long chain acyl-CoA synthetase 3 (665 aa).

ATP is bound at residue 228–239 (IMYTSGTTGDPK). Positions 495–519 (DGWLHTGDVGEWQPDGAMKIIDRKK) are fatty acid-binding.

Belongs to the ATP-dependent AMP-binding enzyme family. The cofactor is Mg(2+).

It carries out the reaction a long-chain fatty acid + ATP + CoA = a long-chain fatty acyl-CoA + AMP + diphosphate. It functions in the pathway lipid metabolism; fatty acid metabolism. Its function is as follows. Activation of long-chain fatty acids for both synthesis of cellular lipids, and degradation via beta-oxidation. Preferentially uses palmitate, palmitoleate, oleate and linoleate. The protein is Long chain acyl-CoA synthetase 3 (LACS3) of Arabidopsis thaliana (Mouse-ear cress).